Here is a 56-residue protein sequence, read N- to C-terminus: Mambaquaretin-9 (56 aa).

3 cysteine pairs are disulfide-bonded: C5-C54, C14-C37, and C29-C50. The BPTI/Kunitz inhibitor domain occupies 5 to 56 (CELTVAAGPCLRFSAFYYSKGANQCYPFNYSGCGGNANRFSTNQKCRRTCVV).

It belongs to the venom Kunitz-type family. As to expression, expressed by the venom gland.

It is found in the secreted. Interacts with vasopressin V2 receptor (V2R/AVPR2), probably in a selective manner. Inhibits vasopressin binding human V2R in the nanomolar range (Ki=45.1 nM), and also potently inhibits vasopressin-induced cAMP production (IC(50)=111 nM). In vivo, intraperitoneal injection of this protein into rats increases diuresis, without any loss of electrolytes. The protein is Mambaquaretin-9 of Dendroaspis viridis (Western green mamba).